A 54-amino-acid chain; its full sequence is uncharacterized protein (54 aa).

Residues 1–54 form a disordered region; sequence MSKKSTPMTKDAASRIQSSAAKSGGDVSSGSFASRAQSAAAINANNTSNSTGKK. A compositionally biased stretch (low complexity) spans 28 to 54; sequence SSGSFASRAQSAAAINANNTSNSTGKK.

This is an uncharacterized protein from Dictyostelium discoideum (Social amoeba).